Consider the following 124-residue polypeptide: Small ribosomal subunit protein uS12 (124 aa).

Positions 1-22 (MATVNQLVRKPRKRKVAKSDVP) are disordered. 3-methylthioaspartic acid is present on aspartate 89. The disordered stretch occupies residues 99–124 (RGSLDTSGVQNRKQGRSKYGTKRPKK). Positions 111 to 124 (KQGRSKYGTKRPKK) are enriched in basic residues.

This sequence belongs to the universal ribosomal protein uS12 family. In terms of assembly, part of the 30S ribosomal subunit. Contacts proteins S8 and S17. May interact with IF1 in the 30S initiation complex.

With S4 and S5 plays an important role in translational accuracy. Functionally, interacts with and stabilizes bases of the 16S rRNA that are involved in tRNA selection in the A site and with the mRNA backbone. Located at the interface of the 30S and 50S subunits, it traverses the body of the 30S subunit contacting proteins on the other side and probably holding the rRNA structure together. The combined cluster of proteins S8, S12 and S17 appears to hold together the shoulder and platform of the 30S subunit. This is Small ribosomal subunit protein uS12 from Marinomonas sp. (strain MWYL1).